The chain runs to 428 residues: Glutamate-1-semialdehyde 2,1-aminomutase (428 aa).

K267 is modified (N6-(pyridoxal phosphate)lysine).

Belongs to the class-III pyridoxal-phosphate-dependent aminotransferase family. HemL subfamily. As to quaternary structure, homodimer. It depends on pyridoxal 5'-phosphate as a cofactor.

It localises to the cytoplasm. It catalyses the reaction (S)-4-amino-5-oxopentanoate = 5-aminolevulinate. Its pathway is porphyrin-containing compound metabolism; protoporphyrin-IX biosynthesis; 5-aminolevulinate from L-glutamyl-tRNA(Glu): step 2/2. The polypeptide is Glutamate-1-semialdehyde 2,1-aminomutase (Flavobacterium psychrophilum (strain ATCC 49511 / DSM 21280 / CIP 103535 / JIP02/86)).